Here is a 2763-residue protein sequence, read N- to C-terminus: MDIIPPIAVTVAGVGSRNQFDGALGPASGLSCLRTSLSFLHMTYAHGINATLSSDMIDGCLQEGAAWTTDLSNMGRGVPDMCALVDLPNRISYIKLGDTTSTCCVLSRIYGDSHFFTVPDEGFMCTQIPARAFFDDVWMGREESYTIITVDSTGMAIYRQGNISFIFDPHGHGTIGQAVVVRVNTTDVYSYIASEYTHRPDNVESQWAAALVFFVTANDGPVSEEALSSAVTLIYGSCDTYFTDEQYCEKLVTAQHPLLLSPPNSTTIVLNKSSIVPLHQNVGESVSLEATLHSTLTNTVALDPRCSYSEVDPWHAVLETTSTGSGVLDCRRRRRPSWTPPSSEENLACIDDGLVNNTHSTDNLHKPAKKVLKFKPTVDVPDKTQVAHVLPRLREVANTPDVVLNVSNVDTPESSPTFSRNMNVGSSLKDRKPFLFEQSGDVNMVVEKLLQHGHEISNGYVQNAVGTLDTVITGHTNVPIWVTRPLVMPDEKDPLELFINLTILRLTGFVVENGTRTHHGATSVVSDFIGPLGEILTGFPSAAELIRVTSLILTNMPGAEYAIKTVLRKKCTIGMLIIAKFGLVAMRVQDTTGALHAELDVLEADLGGSSPIDLYSRLSTGLISILNSPIISHPGLFAELIPTRTGSLSERIRLLCELVSARETRYMREHTALVSSVKALENALRSTRNKIDAIQIPEVPQEPPEETDIPPEELIRRVYEIRSEVTMLLTSAVTEYFTRGVLYSTRALIAEQSPRRFRVATASTAPIQRLLDSLPEFDAKLTAIISSLSIHPPPETIQNLPVVSLLKELIKEGEDLNTDTALVSWLSVVGEAQTAGYLSRREFDELSRTIKTINTRATQRASAEAELSCFNTLSAAVDQAVKDYETYNNGEVKYPEITRDDLLATIVRATDDLVRQIKILSDPMIQSGLQPSIKRRLETRLKEVQTYANEARTTQDTIKSRKQAAYNKLGGLLRPVTGFVGLRAAVDLLPELASELDVQGALVNLRTKVLEAPVEIRSQLTGDFWALFNQYRDILEHPGNARTSVLGGLGACFTAIIEIVPIPTEYRPSLLAFFGDVADVLASDIATVSTNPESESAINAVVATLSKATLVSSTVPALSFVLSLYKKYQALQQEITNTHKLTELQKQLGDDFSTLAVSSGHLKFISSSNVDDYEINDAILSIQTNVHALMDTVKLVEVELQKLPPHCIAGTSTLSRVVKDLHKLVTMAHEKKEQAKVLITDCERAHKQQTTRVLYERWTRDIIACLEAMETRHVFNGTELARLRDMAAAGGFDIHAVYPQARQVVAACETTAVTALDTVFRHNPHTPENTNIPPPLALLRGLTWFDDFSITAPVFTVMFPGVSIEGLLLLMRIRAVVLLSADTSINGIPNYRDMILRTSGDLLQIPALAGYVDFYTRSYDQFITESVTLSELRADIRQAAGAKLTEANKALEEVTHVRAHETAKLALKEGVFITLPSEGLLIRAIEYFTTFDHKRFIGTAYERVLQTMVDRDLKEANAELAQFRMVCQATKNRAIQILQNIVDTANATEQQEDVDFTNLKTLLKLTPPPKTIALAIDRSTSVQDIVTQFALLLGRLEEETGTLDIQAVDWMYQARNIIDSHPLSVRIDGTGPLHTYKDRVDKLYALRTKLDLLRRRIETGEVTWDDAWTTFKRETGDMLASGDTYATSVDSIKALQASASVVDMLCSEPEFFLLPVETKNRLQKKQQERKTALDVVLQKQRQFEETASRLRALIERIPTESDHDVLRMLLHDFDQFTHLPIWIKTQYMTFRNLLMVRLGLYASYAEIFPPASPNGVFAPIPAMSGVCLEDQSRCIRARVAAFMGEASVVQTFREARSSIDALFGKNLTFYLDTDGVPLRYRVCYKSVGVKLGTMLCSQGGLSLRPALPDEGIVEETTLSALRVANEVNELRIEYESAIKSGFSAFSTFVRHRHAEWGKTNARRAIAEIYAGLITTTLTRQYGVHWDKLIYSFEKHHLTSVMGNGLTKPIQRRGDVRVLELTLSDIVTILVATTPVHLLNFARLDLIKQHEYMARTLRPVIEAAFRGRLLVRSLDGDPKGNARAFFNAAPSKHKLPLALGSNQDPTGGRIFAFRMADWKLVKMPQKITDPFAPWQLSPPPGVKANVDAVTRIMATDRLATITVLGRMCLPPISLVSMWNTLQPEEFAYRTQDDVDIIVDARLDLSSTLNARFDTAPSNTTLEWNTDRKVITDAYIQTGATTVFTVTGAAPTHVSNVTAFDIATTAILFGAPLVIAMELTSVFSQNSGLTLGLKLFDSRHMATDSGISSAVSPDIVSWGLRLLHMDPHPIENACLIVQLEKLSALIANKPLTNNPPCLLLLDEHMNPSYVLWERKDSIPAPDYVVFWGPESLIDLPYIDSDEDSFPSCPDDPFYSQIIAGYAPQGPPNLDTTDFYPTEPLFKSPVQVVRSSKCKKMPVQPVQPAQPVQPAQPAQPVQPAQPIEPGTQIVVQNFKKPQSVKTTLSQKDIPLYVETESETAVLIPKQLTTSIKTTVCKSITPPNNQLSDWKNNPQQNQTLNQAFNKPILEITSIPTDDSISYRTWIEKSNQTQKRHQNDPRMYNSKTVFHPVNNQLPSWVDTAADAPQTDLLTNYKTRQPSPNFPRDVHTWGVSSNPFNSPNRDLYESDFSEPSDGYSSESENSIVLSLDEHRSCRVPRHVRVVNADVVTGRRYVRGTALGALALLSQACRRMIDNVRYTRKLLMDHTEDIFQGLGYVKLLLDGTYI.

The segment at 1–247 (MDIIPPIAVT…CDTYFTDEQY (247 aa)) is deubiquitination activity. The region spanning 12-237 (AGVGSRNQFD…SSAVTLIYGS (226 aa)) is the Peptidase C76 domain. Residues Cys-32, Asp-168, and His-170 contribute to the active site. An interaction with inner tegument protein region spans residues 495–523 (LELFINLTILRLTGFVVENGTRTHHGATS). 8 consecutive repeat copies span residues 2455-2457 (PVQ), 2458-2460 (PVQ), 2461-2463 (PAQ), 2464-2466 (PVQ), 2467-2469 (PAQ), 2470-2472 (PAQ), 2473-2475 (PVQ), and 2476-2478 (PAQ). The segment at 2455–2478 (PVQPVQPAQPVQPAQPAQPVQPAQ) is 8 X 3 AA repeats of P-A/V-Q. Positions 2630-2651 (NYKTRQPSPNFPRDVHTWGVSS) are disordered.

Belongs to the herpesviridae large tegument protein family. Interacts with host CUL1 and CUL4A; these interactions inhibit the E3 ligase activity of cullins. Interacts with inner tegument protein. Interacts with capsid vertex specific component CVC2. Interacts with the major capsid protein/MCP.

It is found in the virion tegument. The protein resides in the host cytoplasm. Its subcellular location is the host nucleus. The catalysed reaction is Thiol-dependent hydrolysis of ester, thioester, amide, peptide and isopeptide bonds formed by the C-terminal Gly of ubiquitin (a 76-residue protein attached to proteins as an intracellular targeting signal).. Its function is as follows. Large tegument protein that plays multiple roles in the viral cycle. During viral entry, remains associated with the capsid while most of the tegument is detached and participates in the capsid transport toward the host nucleus. Plays a role in the routing of the capsid at the nuclear pore complex and subsequent uncoating. Within the host nucleus, acts as a deneddylase and promotes the degradation of nuclear CRLs (cullin-RING ubiquitin ligases) and thereby stabilizes nuclear CRL substrates, while cytoplasmic CRLs remain unaffected. These modifications prevent host cell cycle S-phase progression and create a favorable environment allowing efficient viral genome replication. Participates later in the secondary envelopment of capsids. Indeed, plays a linker role for the association of the outer viral tegument to the capsids together with the inner tegument protein. The protein is Large tegument protein deneddylase of Varicella-zoster virus (strain Oka vaccine) (HHV-3).